A 440-amino-acid chain; its full sequence is MNHIETRLPLPIQPIDRWLRPFARFLHIEATSGLVLILCTVVALVAANSSWADSYLAFWHTDLTIAVGDIVFHHSLHHVINDGLMAVFFFVIGLEVKRELAHGSLSDLKQATLPIAAAIGGMIVPATLYLSMQYGQPGVQGWGIPMATDIAFVVGCLAILGSRVPHSLRVLLLSLAIVDDIGAILVIAIGYTESLDGRYLFLAAVAVGAVHFLSRIGVRRFPPYVIVGVLAWIALHESGIHATLIGVILGLMTPATPTLVPERFREYLHEKEHEFQPKEWSRRLHRAEVVREVQQLTRETVSPLEYLEVTLHPWTAYVIMPVFALANAGVLIEPANLSDSVAIAVVIGLVVGKPLGIALFSWLVIRLGVARLPSGLNWPILMSGSFLAGIGFTMALFIDGLAFGADGLDTAKTGVLVGSAISAIAGMGLLLWTLPKPTRQ.

Helical transmembrane passes span 25–45, 76–96, 112–132, 141–161, 170–190, 194–214, 225–245, 312–332, 345–365, 378–398, and 414–434; these read FLHI…VALV, LHHV…GLEV, TLPI…YLSM, GWGI…AILG, VLLL…IAIG, SLDG…HFLS, VIVG…ATLI, HPWT…GVLI, VVIG…WLVI, WPIL…ALFI, and GVLV…LWTL.

This sequence belongs to the NhaA Na(+)/H(+) (TC 2.A.33) antiporter family.

Its subcellular location is the cell inner membrane. The catalysed reaction is Na(+)(in) + 2 H(+)(out) = Na(+)(out) + 2 H(+)(in). Functionally, na(+)/H(+) antiporter that extrudes sodium in exchange for external protons. In Rhodopirellula baltica (strain DSM 10527 / NCIMB 13988 / SH1), this protein is Na(+)/H(+) antiporter NhaA.